A 178-amino-acid polypeptide reads, in one-letter code: ATP-dependent protease subunit HslV (178 aa).

Threonine 5 is a catalytic residue. 3 residues coordinate Na(+): alanine 160, cysteine 163, and threonine 166.

Belongs to the peptidase T1B family. HslV subfamily. In terms of assembly, a double ring-shaped homohexamer of HslV is capped on each side by a ring-shaped HslU homohexamer. The assembly of the HslU/HslV complex is dependent on binding of ATP.

It is found in the cytoplasm. It catalyses the reaction ATP-dependent cleavage of peptide bonds with broad specificity.. Allosterically activated by HslU binding. Functionally, protease subunit of a proteasome-like degradation complex believed to be a general protein degrading machinery. In Magnetococcus marinus (strain ATCC BAA-1437 / JCM 17883 / MC-1), this protein is ATP-dependent protease subunit HslV.